A 1850-amino-acid polypeptide reads, in one-letter code: Voltage-dependent L-type calcium channel subunit alpha-1S (1850 aa).

The interval 1-23 is disordered; it reads MEPSSPQDEGLRKKQPKKPVPEI. Residues 1–51 are Cytoplasmic-facing; that stretch reads MEPSSPQDEGLRKKQPKKPVPEILPRPPRALFCLTLQNPLRKACISVVEWK. One copy of the I repeat lies at 38-337; that stretch reads NPLRKACISV…LVLGVLSGEF (300 aa). The helical transmembrane segment at 52–70 threads the bilayer; it reads PFETIILLTIFANCVALAV. The Extracellular portion of the chain corresponds to 71 to 85; that stretch reads YLPMPEDDNNTLNLG. Residues 86–106 form a helical membrane-spanning segment; it reads LEKLEYFFLIVFSIEAAMKII. The Cytoplasmic segment spans residues 107 to 115; the sequence is AYGFLFHQD. A helical membrane pass occupies residues 116-136; sequence AYLRSGWNVLDFIIVFLGVFT. Residues 137–160 are Extracellular-facing; the sequence is AILEQVNIIQTNTAPMSSKGAGLD. The chain crosses the membrane as a helical span at residues 161-179; that stretch reads VKALRAFRVLRPLRLVSGV. Residues 180-196 are Cytoplasmic-facing; the sequence is PSLQVVLNSIFKAMLPL. Residues 197–218 form a helical membrane-spanning segment; the sequence is FHIALLVLFMVIIYAIIGLELF. Topologically, residues 219-279 are extracellular; sequence KGKMHKTCYF…HGITHFDNFG (61 aa). Intrachain disulfides connect Cys-226/Cys-254 and Cys-245/Cys-261. Residues 280–301 constitute an intramembrane region (pore-forming); sequence FSMLTVYQCISMEGWTDVLYWV. Positions 290-293 match the Selectivity filter of repeat I motif; sequence SMEG. Glu-292 contacts Ca(2+). Residues 302 to 309 lie on the Extracellular side of the membrane; it reads NDAIGNEW. A helical transmembrane segment spans residues 310 to 330; it reads PWIYFVTLILLGSFFILNLVL. Topologically, residues 331–432 are cytoplasmic; that stretch reads GVLSGEFTKE…WKCHDLVKSK (102 aa). The binding to the beta subunit stretch occupies residues 357–374; it reads QQLEEDLRGYMSWITQGE. Residues Ser-393 and Ser-397 each carry the phosphoserine modification. The II repeat unit spans residues 418–664; sequence NRVFRWKCHD…VFLAIAVDNL (247 aa). Residues 433–451 traverse the membrane as a helical segment; sequence VFYWLVILIVALNTLSIAS. Residues 452-462 lie on the Extracellular side of the membrane; sequence EHHNQPLWLTH. Residues 463 to 483 form a helical membrane-spanning segment; the sequence is LQDVANRVLLALFTIEMLMKM. Residues 484 to 494 lie on the Cytoplasmic side of the membrane; it reads YGLGLRQYFMS. Residues 495–514 form a helical membrane-spanning segment; sequence IFNRFDCFVVCSGILEILLV. The Extracellular segment spans residues 515–523; the sequence is ESGAMTPLG. Residues 524 to 542 traverse the membrane as a helical segment; it reads ISVLRCIRLLRLFKITKYW. The Cytoplasmic portion of the chain corresponds to 543–561; it reads TSLSNLVASLLNSIRSIAS. Residues 562-581 traverse the membrane as a helical segment; sequence LLLLLFLFMIIFALLGMQLF. The Extracellular segment spans residues 582 to 601; sequence GGRYDFEDTEVRRSNFDNFP. Positions 602–623 form an intramembrane region, pore-forming; the sequence is QALISVFQVLTGEDWNSVMYNG. The Selectivity filter of repeat II signature appears at 612-615; the sequence is TGED. Residue Glu-614 participates in Ca(2+) binding. The Extracellular segment spans residues 624–633; it reads IMAYGGPSYP. The chain crosses the membrane as a helical span at residues 634 to 653; the sequence is GVLVCIYFIILFVCGNYILL. The Cytoplasmic portion of the chain corresponds to 654–799; it reads NVFLAIAVDN…VLCHRIVNAT (146 aa). Disordered regions lie at residues 673-717 and 731-758; these read AQKA…IPTT and EVKD…SPRP. Ser-687 bears the Phosphoserine; by PKA mark. The segment covering 690–711 has biased composition (basic and acidic residues); the sequence is LPDKSEEERSTMTKKLEQKPKG. The span at 742-751 shows a compositional bias: acidic residues; it reads PGDDEEDEPE. One copy of the III repeat lies at 786-1068; sequence NKIRVLCHRI…IFVGFVIVTF (283 aa). A helical transmembrane segment spans residues 800–818; the sequence is WFTNFILLFILLSSAALAA. Topologically, residues 819–830 are extracellular; it reads EDPIRADSMRNQ. The chain crosses the membrane as a helical span at residues 831 to 850; the sequence is ILEYFDYVFTAVFTVEIVLK. At 851–866 the chain is on the cytoplasmic side; it reads MTTYGAFLHKGSFCRN. Residues 867–885 form a helical membrane-spanning segment; it reads YFNILDLLVVAVSLISMGL. The Extracellular portion of the chain corresponds to 886–892; that stretch reads ESSAISV. A helical transmembrane segment spans residues 893 to 911; the sequence is VKILRVLRVLRPLRAINRA. Over 912 to 930 the chain is Cytoplasmic; that stretch reads KGLKHVVQCVFVAIRTIGN. A helical membrane pass occupies residues 931–950; that stretch reads IVLVTTLLQFMFACIGVQLF. Residues 951-1000 lie on the Extracellular side of the membrane; it reads KGKFYSCNDLSKMTEEECRGYYYIYKDGDPTQIELRPRQWIHNDFHFDNV. A disulfide bridge connects residues Cys-957 and Cys-968. Residues 988-1077 form a dihydropyridine binding region; the sequence is RQWIHNDFHF…FQEQGETEYK (90 aa). The segment at residues 1001–1021 is an intramembrane region (pore-forming); that stretch reads LSAMMSLFTVSTFEGWPQLLY. Positions 1012 to 1015 match the Selectivity filter of repeat III motif; the sequence is TFEG. Glu-1014 provides a ligand contact to Ca(2+). Topologically, residues 1022 to 1038 are extracellular; it reads KAIDSNEEDTGPVYNNR. The chain crosses the membrane as a helical span at residues 1039-1060; sequence VEMAIFFIIYIILIAFFMMNIF. Topologically, residues 1061–1118 are cytoplasmic; that stretch reads VGFVIVTFQEQGETEYKNCELDKNQRQCVQYALKARPLRCYIPKNPYQYQVWYVVTSS. The IV repeat unit spans residues 1105-1384; sequence NPYQYQVWYV…LFVAVIMDNF (280 aa). Residues 1119–1140 form a helical membrane-spanning segment; it reads YFEYLMFALIMLNTICLGMQHY. Asn-1141 carries N-linked (GlcNAc...) asparagine glycosylation. Over 1141–1148 the chain is Extracellular; it reads NQSEQMNH. Residues 1149 to 1170 traverse the membrane as a helical segment; that stretch reads ISDILNVAFTIIFTLEMILKLI. Over 1171–1180 the chain is Cytoplasmic; it reads AFKPRGYFGD. Residues 1181–1200 form a helical membrane-spanning segment; the sequence is PWNVFDFLIVIGSIIDVILS. Over 1201–1231 the chain is Extracellular; it reads EIDTLLASSGGLYCLGGGCGNVDPDESARIS. A helical membrane pass occupies residues 1232 to 1250; that stretch reads SAFFRLFRVMRLIKLLSRA. Residues 1251-1268 lie on the Cytoplasmic side of the membrane; it reads EGVRTLLWTFIKSFQALP. Residues 1269–1289 traverse the membrane as a helical segment; the sequence is YVALLIVMLFFIYAVIGMQMF. The Extracellular segment spans residues 1290 to 1311; that stretch reads GKIAMVDGTQINRNNNFQTFPQ. An intramembrane region (pore-forming) is located at residues 1312 to 1330; it reads AVLLLFRCATGEAWQEILL. The Selectivity filter of repeat IV motif lies at 1321 to 1324; the sequence is TGEA. Topologically, residues 1331–1356 are extracellular; it reads ACSYGKRCDPESDYAPGEEYACGTNF. Residues 1337–1403 are dihydropyridine binding; sequence RCDPESDYAP…LGPHHLDEFK (67 aa). Cys-1338 and Cys-1352 are oxidised to a cystine. Residues 1349–1391 form a phenylalkylamine binding region; that stretch reads EYACGTNFAYYYFISFYMLCAFLIINLFVAVIMDNFDYLTRDW. The chain crosses the membrane as a helical span at residues 1357 to 1381; the sequence is AYYYFISFYMLCAFLIINLFVAVIM. Residues 1382 to 1850 lie on the Cytoplasmic side of the membrane; the sequence is DNFDYLTRDW…PKGGAMPREP (469 aa). The segment at 1522-1542 is interaction with calmodulin; the sequence is KFYATFLIQEHFRKFMKRQEE. Ser-1575 is modified (phosphoserine; by PKA and CAMK2). Position 1579 is a phosphothreonine (Thr-1579). The residue at position 1617 (Ser-1617) is a Phosphoserine; by PKA. A disordered region spans residues 1697–1779; sequence PVTREGPFSQ…FEERVPRNSA (83 aa). Residues 1706–1716 show a composition bias toward polar residues; the sequence is QPCSVSGVNSR. Basic and acidic residues-rich tracts occupy residues 1717-1726 and 1745-1756; these read SHVDKLERQM and QEKHPVHEEGKG.

Belongs to the calcium channel alpha-1 subunit (TC 1.A.1.11) family. CACNA1S subfamily. As to quaternary structure, component of a calcium channel complex consisting of a pore-forming alpha subunit (CACNA1S) and the ancillary subunits CACNB1 or CACNB2, CACNG1 and CACNA2D1. The channel complex contains alpha, beta, gamma and delta subunits in a 1:1:1:1 ratio, i.e. it contains either CACNB1 or CACNB2. CACNA1S channel activity is modulated by the auxiliary subunits (CACNB1 or CACNB2, CACNG1 and CACNA2D1). Interacts with DYSF and JSRP1. Interacts with RYR1. Interacts with STAC, STAC2 and STAC3 (via their SH3 domains). Interacts with CALM. In terms of processing, the alpha-1S subunit is found in two isoforms in the skeletal muscle: a minor form of 212 kDa containing the complete amino acid sequence, and a major form of 190 kDa derived from the full-length form by post-translational proteolysis close to Phe-1690. Post-translationally, phosphorylated. Phosphorylation by PKA activates the calcium channel. Both the minor and major forms are phosphorylated in vitro by PKA. Phosphorylation at Ser-1575 is involved in beta-adrenergic-mediated regulation of the channel. Skeletal muscle specific.

The protein localises to the cell membrane. The protein resides in the sarcolemma. It localises to the T-tubule. It carries out the reaction Ca(2+)(in) = Ca(2+)(out). With respect to regulation, channel activity is blocked by dihydropyridines (DHP), phenylalkylamines, and by benzothiazepines. Pore-forming, alpha-1S subunit of the voltage-gated calcium channel that gives rise to L-type calcium currents in skeletal muscle. Calcium channels containing the alpha-1S subunit play an important role in excitation-contraction coupling in skeletal muscle via their interaction with RYR1, which triggers Ca(2+) release from the sarcplasmic reticulum and ultimately results in muscle contraction. Long-lasting (L-type) calcium channels belong to the 'high-voltage activated' (HVA) group. This chain is Voltage-dependent L-type calcium channel subunit alpha-1S (Cacna1s), found in Rattus norvegicus (Rat).